We begin with the raw amino-acid sequence, 152 residues long: Superoxide dismutase [Cu-Zn] (152 aa).

Positions 45, 47, and 62 each coordinate Cu cation. Cys-56 and Cys-145 form a disulfide bridge. Zn(2+) is bound by residues His-62, His-70, His-79, and Asp-82. Residue His-119 participates in Cu cation binding.

This sequence belongs to the Cu-Zn superoxide dismutase family. In terms of assembly, homodimer. Cu cation serves as cofactor. It depends on Zn(2+) as a cofactor.

The protein localises to the cytoplasm. The catalysed reaction is 2 superoxide + 2 H(+) = H2O2 + O2. In terms of biological role, destroys radicals which are normally produced within the cells and which are toxic to biological systems. The polypeptide is Superoxide dismutase [Cu-Zn] (SODCC) (Paulownia kawakamii (Dragon tree)).